Here is a 255-residue protein sequence, read N- to C-terminus: Ribose-5-phosphate isomerase (255 aa).

It belongs to the ribose 5-phosphate isomerase family.

It localises to the cytoplasm. It carries out the reaction aldehydo-D-ribose 5-phosphate = D-ribulose 5-phosphate. Its pathway is carbohydrate degradation; pentose phosphate pathway; D-ribose 5-phosphate from D-ribulose 5-phosphate (non-oxidative stage): step 1/1. The chain is Ribose-5-phosphate isomerase (RKI1) from Eremothecium gossypii (strain ATCC 10895 / CBS 109.51 / FGSC 9923 / NRRL Y-1056) (Yeast).